Consider the following 508-residue polypeptide: Protein FAM227B (508 aa).

Disordered regions lie at residues 1 to 22 (MAGQ…MQEP) and 485 to 508 (ASLS…EEEY). The segment covering 486–497 (SLSSSSSSSPSS) has biased composition (low complexity).

This sequence belongs to the FAM227 family.

The sequence is that of Protein FAM227B (FAM227B) from Homo sapiens (Human).